A 970-amino-acid chain; its full sequence is Insulin-degrading enzyme-like 1, peroxisomal (970 aa).

H69 is a Zn(2+) binding site. The active-site Proton acceptor is the E72. H73 contributes to the Zn(2+) binding site. The active site involves E143. Position 150 (E150) interacts with Zn(2+).

This sequence belongs to the peptidase M16 family. The cofactor is Zn(2+).

The protein localises to the peroxisome. Its function is as follows. Peptidase that might be involved in pathogen or wound response. Not required for peroxisome biogenesis, indole-3-butyric acid (IBA) metabolism, fatty acid beta-oxidation or degradation of glyoxylate cycle enzymes during seedling development. This is Insulin-degrading enzyme-like 1, peroxisomal (PXM16) from Arabidopsis thaliana (Mouse-ear cress).